The primary structure comprises 452 residues: MKSIPKLFGTSGIRGKYQEEITLELALDVARALAKYIGGKNKKVVIGRDTRTSGKIIENVMSAGLQQSGCDVLLLGMVPTPVVGYATLKKEADAGIMITASHNPSQYNGIKLWNSDGLAYKQDQERTIEKLVYEKDFNIVKWNEIGKEYDISSFKDKYIDDIVAKSGINPLKPLKVVVDCACGAGSYLSPEALRRAGMNVITLNAQPDGSFPGRRPEPNEANLGELMKTVKALNADVGLAHDGDADRMIAVDENGNLSDFDKLLTIMAKEFGGTVVTTVDASACLDIQMQKIGGNVLRTPVGDVHVAESINKNKGTFGGEPSGTWLHPDFCMCPDGLLSGLRIVRTIQKNGKLSKQLDAIENYPTIRQKVTCENSKKKTVMSIVEEKFEEEFDDVKEILTIDGVRISFEDDSWVLIRPSGTEPYIRITAEGKTQEHLNSIEKISNEFLNNII.

S101 functions as the Phosphoserine intermediate in the catalytic mechanism. Mg(2+) contacts are provided by S101, D242, D244, and D246. At S101 the chain carries Phosphoserine.

It belongs to the phosphohexose mutase family. It depends on Mg(2+) as a cofactor. In terms of processing, activated by phosphorylation.

The catalysed reaction is alpha-D-glucosamine 1-phosphate = D-glucosamine 6-phosphate. Catalyzes the conversion of glucosamine-6-phosphate to glucosamine-1-phosphate. The sequence is that of Probable phosphoglucosamine mutase from Methanosphaera stadtmanae (strain ATCC 43021 / DSM 3091 / JCM 11832 / MCB-3).